The primary structure comprises 399 residues: Mycinamicin VI 2''-O-methyltransferase (399 aa).

Residues T173, 202–208, S217, D234, 252–253, and D275 each bind S-adenosyl-L-methionine; these read EIGVGGY and DQ. Residue D275 coordinates Mg(2+). The active-site Proton acceptor is H278. 2 residues coordinate Mg(2+): E303 and D304.

This sequence belongs to the methyltransferase OleY/MycE family. Homotetramer. Mg(2+) is required as a cofactor.

It catalyses the reaction mycinamicin VI + S-adenosyl-L-methionine = mycinamicin III + S-adenosyl-L-homocysteine + H(+). It functions in the pathway antibiotic biosynthesis; mycinamicin biosynthesis. Functionally, O-methyltransferase that catalyzes the conversion of mycinamicin VI to mycinamicin III in the biosynthesis of mycinamicin, a 16-membered macrolide antibiotic. This is Mycinamicin VI 2''-O-methyltransferase (mycE) from Micromonospora griseorubida.